The chain runs to 487 residues: MSDVYADWESVIGLEVHVELNTKSKLFSCARNRFGDEPNTNISPVCTGMPGSLPVLNKEAVRKAILFGCAVQGEVALLSRFDRKSYFYPDSPRNFQITQFEHPIVRGGRVKAIVQGEERYFELAQAHIEDDAGMLKHFGEFAGVDYNRAGVPLIEIVSKPCMFCADDAVAYATALVSLLDYIGISDCNMEEGSVRFDVNVSVRPRGSDELRNKVEIKNMNSFAFMAQALEAERCRQIEAYLENPNKDPKTVIPGATYRWDPEKKKTVLMRLKERAEDYKYFIEPDLPVLQLTEAYINEIRDTLPELPYDKYQRYLHDYALAEDIAAILISDKHIAHFFELAAAECKNYRALSNWVTVEFAGRCKTQGKNLAFSGILPSSVAQLVNFIDKGVITGKIAKDLADMMMESPEKSPEAILNEHPEMLPMTDESALVAIISEVLAANAQSVIDYKNGKTKALGFLVGQIMKRTQGKAPPNRVNELLLAELDK.

This sequence belongs to the GatB/GatE family. GatB subfamily. As to quaternary structure, heterotrimer of A, B and C subunits.

The catalysed reaction is L-glutamyl-tRNA(Gln) + L-glutamine + ATP + H2O = L-glutaminyl-tRNA(Gln) + L-glutamate + ADP + phosphate + H(+). The enzyme catalyses L-aspartyl-tRNA(Asn) + L-glutamine + ATP + H2O = L-asparaginyl-tRNA(Asn) + L-glutamate + ADP + phosphate + 2 H(+). Functionally, allows the formation of correctly charged Asn-tRNA(Asn) or Gln-tRNA(Gln) through the transamidation of misacylated Asp-tRNA(Asn) or Glu-tRNA(Gln) in organisms which lack either or both of asparaginyl-tRNA or glutaminyl-tRNA synthetases. The reaction takes place in the presence of glutamine and ATP through an activated phospho-Asp-tRNA(Asn) or phospho-Glu-tRNA(Gln). The polypeptide is Aspartyl/glutamyl-tRNA(Asn/Gln) amidotransferase subunit B (Chlamydia caviae (strain ATCC VR-813 / DSM 19441 / 03DC25 / GPIC) (Chlamydophila caviae)).